Here is a 119-residue protein sequence, read N- to C-terminus: Fluoride-specific ion channel FluC (119 aa).

4 helical membrane-spanning segments follow: residues 5–25 (IIPLSIGAALGATARWLLNLA), 30–50 (LSPATGNLFANWTGAFLIGIF), 59–79 (WKLLLITGFLGSLTTLSGFSL), and 92–112 (SALANIFLHTAGSLLLTWLGL). The Na(+) site is built by Gly-69 and Thr-72.

Belongs to the fluoride channel Fluc/FEX (TC 1.A.43) family.

It is found in the cell inner membrane. The enzyme catalyses fluoride(in) = fluoride(out). Its activity is regulated as follows. Na(+) is not transported, but it plays an essential structural role and its presence is essential for fluoride channel function. In terms of biological role, fluoride-specific ion channel. Important for reducing fluoride concentration in the cell, thus reducing its toxicity. The protein is Fluoride-specific ion channel FluC of Neisseria meningitidis serogroup A / serotype 4A (strain DSM 15465 / Z2491).